Here is a 490-residue protein sequence, read N- to C-terminus: MSATLFDPKSIAVSNPVDTSTQASLAHASQPTGQAKKKVYIATQGCQMNVYDSEKMGNVLGDSHDMVVTDNIEEADVLLMNTCSIREKAQEKVFSELGRWRKLKEEKPDLVIGVGGCVASQEGDNIQKRAPYVDMVFGPQTLHRLPELYDKSTTQRNVKPKDRIGTVDVSFPSIEKFDFLPEPKVEGYRAFVSIMEGCSKYCSFCVVPYTRGEELSRPLDDVLAEIDSLAEQGVREITLLGQNVNGYRGEKDDGSICRFAELLHYVAHVDGIERIRYTTSHPLEFTDDIIEAYAKLPQLVSHLHLPVQSGSNKILAAMKRNHTIDVYINQINKLMAVRPDMHLSSDFIIGFPGETEEDFLDTLNLAKALDFDHSYSFIYSKRPGTPASELPDDVSLATKKERLAIFQKVIRDSTLKKTEEMVGKTLRVMVEEIADRYPDQLLGTADNTRSVLFKATEQQKTDLMGKFVTVKITDFVSPHMVRGELVDILD.

The MTTase N-terminal domain maps to 37–154 (KKVYIATQGC…LPELYDKSTT (118 aa)). C46, C83, C117, C198, C202, and C205 together coordinate [4Fe-4S] cluster. The Radical SAM core domain maps to 184–416 (KVEGYRAFVS…QKVIRDSTLK (233 aa)). In terms of domain architecture, TRAM spans 419-487 (EEMVGKTLRV…PHMVRGELVD (69 aa)).

It belongs to the methylthiotransferase family. MiaB subfamily. As to quaternary structure, monomer. It depends on [4Fe-4S] cluster as a cofactor.

Its subcellular location is the cytoplasm. The enzyme catalyses N(6)-dimethylallyladenosine(37) in tRNA + (sulfur carrier)-SH + AH2 + 2 S-adenosyl-L-methionine = 2-methylsulfanyl-N(6)-dimethylallyladenosine(37) in tRNA + (sulfur carrier)-H + 5'-deoxyadenosine + L-methionine + A + S-adenosyl-L-homocysteine + 2 H(+). Catalyzes the methylthiolation of N6-(dimethylallyl)adenosine (i(6)A), leading to the formation of 2-methylthio-N6-(dimethylallyl)adenosine (ms(2)i(6)A) at position 37 in tRNAs that read codons beginning with uridine. The protein is tRNA-2-methylthio-N(6)-dimethylallyladenosine synthase of Psychrobacter sp. (strain PRwf-1).